Consider the following 182-residue polypeptide: UPF0301 protein NMB1336 (182 aa).

Belongs to the UPF0301 (AlgH) family.

The protein is UPF0301 protein NMB1336 of Neisseria meningitidis serogroup B (strain ATCC BAA-335 / MC58).